The sequence spans 210 residues: Peptidyl-tRNA hydrolase (210 aa).

Tyrosine 30 is a binding site for tRNA. The active-site Proton acceptor is histidine 35. TRNA-binding residues include tyrosine 81, asparagine 83, and asparagine 129.

This sequence belongs to the PTH family. As to quaternary structure, monomer.

The protein resides in the cytoplasm. The catalysed reaction is an N-acyl-L-alpha-aminoacyl-tRNA + H2O = an N-acyl-L-amino acid + a tRNA + H(+). Hydrolyzes ribosome-free peptidyl-tRNAs (with 1 or more amino acids incorporated), which drop off the ribosome during protein synthesis, or as a result of ribosome stalling. In terms of biological role, catalyzes the release of premature peptidyl moieties from peptidyl-tRNA molecules trapped in stalled 50S ribosomal subunits, and thus maintains levels of free tRNAs and 50S ribosomes. In Bordetella petrii (strain ATCC BAA-461 / DSM 12804 / CCUG 43448), this protein is Peptidyl-tRNA hydrolase.